We begin with the raw amino-acid sequence, 151 residues long: Ubiquitin-conjugating enzyme E2 W (151 aa).

One can recognise a UBC core domain in the interval 3–151 (SMQKRLQKEL…TKWWYHDDTC (149 aa)). Cysteine 91 (glycyl thioester intermediate) is an active-site residue.

The protein belongs to the ubiquitin-conjugating enzyme family.

The protein resides in the nucleus. It catalyses the reaction S-ubiquitinyl-[E1 ubiquitin-activating enzyme]-L-cysteine + [E2 ubiquitin-conjugating enzyme]-L-cysteine = [E1 ubiquitin-activating enzyme]-L-cysteine + S-ubiquitinyl-[E2 ubiquitin-conjugating enzyme]-L-cysteine.. The enzyme catalyses S-ubiquitinyl-[E1 ubiquitin-activating enzyme]-L-cysteine + [acceptor protein]-N-terminal-amino acid = [E1 ubiquitin-activating enzyme]-L-cysteine + N-terminal-ubiquitinyl-[acceptor protein].. Its pathway is protein modification; protein ubiquitination. Functionally, accepts ubiquitin from the E1 complex and catalyzes its covalent attachment to other proteins. Catalyzes monoubiquitination. Involved in degradation of misfolded chaperone substrate and DNA repair. This Xenopus tropicalis (Western clawed frog) protein is Ubiquitin-conjugating enzyme E2 W (ube2w).